Reading from the N-terminus, the 243-residue chain is UPF0246 protein SpyM3_1790 (243 aa).

It belongs to the UPF0246 family.

The polypeptide is UPF0246 protein SpyM3_1790 (Streptococcus pyogenes serotype M3 (strain ATCC BAA-595 / MGAS315)).